The following is a 69-amino-acid chain: Cytochrome c oxidase subunit 8A, mitochondrial (69 aa).

A mitochondrion-targeting transit peptide spans 1 to 25 (MSVLTPLLLRGLTGSARRLPVPCAR). The short motif at 2 to 19 (SVLTPLLLRGLTGSARRL) is the SIFI-degron element. The Mitochondrial matrix portion of the chain corresponds to 26 to 36 (VHSKPPREQLG). Residues 37–60 (TMDIAIGLTSCFVCFLLPSGWVLS) traverse the membrane as a helical segment. Residues 61 to 69 (HLENYKKRE) lie on the Mitochondrial intermembrane side of the membrane.

The protein belongs to the cytochrome c oxidase VIII family. As to quaternary structure, component of the cytochrome c oxidase (complex IV, CIV), a multisubunit enzyme composed of 14 subunits. The complex is composed of a catalytic core of 3 subunits MT-CO1, MT-CO2 and MT-CO3, encoded in the mitochondrial DNA, and 11 supernumerary subunits COX4I, COX5A, COX5B, COX6A, COX6B, COX6C, COX7A, COX7B, COX7C, COX8 and NDUFA4, which are encoded in the nuclear genome. The complex exists as a monomer or a dimer and forms supercomplexes (SCs) in the inner mitochondrial membrane with NADH-ubiquinone oxidoreductase (complex I, CI) and ubiquinol-cytochrome c oxidoreductase (cytochrome b-c1 complex, complex III, CIII), resulting in different assemblies (supercomplex SCI(1)III(2)IV(1) and megacomplex MCI(2)III(2)IV(2)). In response to mitochondrial stress, the precursor protein is ubiquitinated by the SIFI complex in the cytoplasm before mitochondrial import, leading to its degradation. Within the SIFI complex, UBR4 initiates ubiquitin chain that are further elongated or branched by KCMF1.

The protein localises to the mitochondrion inner membrane. It functions in the pathway energy metabolism; oxidative phosphorylation. In terms of biological role, component of the cytochrome c oxidase, the last enzyme in the mitochondrial electron transport chain which drives oxidative phosphorylation. The respiratory chain contains 3 multisubunit complexes succinate dehydrogenase (complex II, CII), ubiquinol-cytochrome c oxidoreductase (cytochrome b-c1 complex, complex III, CIII) and cytochrome c oxidase (complex IV, CIV), that cooperate to transfer electrons derived from NADH and succinate to molecular oxygen, creating an electrochemical gradient over the inner membrane that drives transmembrane transport and the ATP synthase. Cytochrome c oxidase is the component of the respiratory chain that catalyzes the reduction of oxygen to water. Electrons originating from reduced cytochrome c in the intermembrane space (IMS) are transferred via the dinuclear copper A center (CU(A)) of subunit 2 and heme A of subunit 1 to the active site in subunit 1, a binuclear center (BNC) formed by heme A3 and copper B (CU(B)). The BNC reduces molecular oxygen to 2 water molecules using 4 electrons from cytochrome c in the IMS and 4 protons from the mitochondrial matrix. This Otolemur crassicaudatus (Brown greater galago) protein is Cytochrome c oxidase subunit 8A, mitochondrial (COX8A).